A 308-amino-acid chain; its full sequence is Glutaminase 2 (308 aa).

Substrate is bound by residues Ser-66, Asn-117, Glu-161, Asn-168, Tyr-192, Tyr-244, and Val-262.

Belongs to the glutaminase family. In terms of assembly, homotetramer.

It carries out the reaction L-glutamine + H2O = L-glutamate + NH4(+). The sequence is that of Glutaminase 2 from Shigella flexneri.